Reading from the N-terminus, the 513-residue chain is ATP synthase subunit alpha (513 aa).

Residue 169–176 participates in ATP binding; sequence GDRQTGKT.

It belongs to the ATPase alpha/beta chains family. F-type ATPases have 2 components, CF(1) - the catalytic core - and CF(0) - the membrane proton channel. CF(1) has five subunits: alpha(3), beta(3), gamma(1), delta(1), epsilon(1). CF(0) has three main subunits: a(1), b(2) and c(9-12). The alpha and beta chains form an alternating ring which encloses part of the gamma chain. CF(1) is attached to CF(0) by a central stalk formed by the gamma and epsilon chains, while a peripheral stalk is formed by the delta and b chains.

Its subcellular location is the cell inner membrane. The catalysed reaction is ATP + H2O + 4 H(+)(in) = ADP + phosphate + 5 H(+)(out). Functionally, produces ATP from ADP in the presence of a proton gradient across the membrane. The alpha chain is a regulatory subunit. The polypeptide is ATP synthase subunit alpha (Pasteurella multocida (strain Pm70)).